Consider the following 123-residue polypeptide: Small ribosomal subunit protein uS12 (123 aa).

Residue aspartate 89 is modified to 3-methylthioaspartic acid.

This sequence belongs to the universal ribosomal protein uS12 family. Part of the 30S ribosomal subunit. Contacts proteins S8 and S17. May interact with IF1 in the 30S initiation complex.

With S4 and S5 plays an important role in translational accuracy. Functionally, interacts with and stabilizes bases of the 16S rRNA that are involved in tRNA selection in the A site and with the mRNA backbone. Located at the interface of the 30S and 50S subunits, it traverses the body of the 30S subunit contacting proteins on the other side and probably holding the rRNA structure together. The combined cluster of proteins S8, S12 and S17 appears to hold together the shoulder and platform of the 30S subunit. The chain is Small ribosomal subunit protein uS12 from Brucella abortus (strain S19).